Consider the following 282-residue polypeptide: Biotin synthase (282 aa).

The region spanning 1-228 is the Radical SAM core domain; that stretch reads MQEIFLCSIS…NARLMAAGGR (228 aa). Positions 17, 21, and 24 each coordinate [4Fe-4S] cluster. Residues Cys-61, Cys-96, Cys-154, and Arg-221 each coordinate [2Fe-2S] cluster.

It belongs to the radical SAM superfamily. Biotin synthase family. As to quaternary structure, homodimer. It depends on [4Fe-4S] cluster as a cofactor. [2Fe-2S] cluster is required as a cofactor.

The catalysed reaction is (4R,5S)-dethiobiotin + (sulfur carrier)-SH + 2 reduced [2Fe-2S]-[ferredoxin] + 2 S-adenosyl-L-methionine = (sulfur carrier)-H + biotin + 2 5'-deoxyadenosine + 2 L-methionine + 2 oxidized [2Fe-2S]-[ferredoxin]. The protein operates within cofactor biosynthesis; biotin biosynthesis; biotin from 7,8-diaminononanoate: step 2/2. Catalyzes the conversion of dethiobiotin (DTB) to biotin by the insertion of a sulfur atom into dethiobiotin via a radical-based mechanism. The protein is Biotin synthase of Helicobacter acinonychis (strain Sheeba).